The sequence spans 176 residues: Disulfide bond formation protein B (176 aa).

At 1 to 13 (MQFLNTFSKSRIS) the chain is on the cytoplasmic side. The helical transmembrane segment at 14 to 30 (WLLLLLCIVFFEGSALF) threads the bilayer. The Periplasmic segment spans residues 31 to 48 (FQHGMKLGPCVMCIYERV). Cys40 and Cys43 are joined by a disulfide. The helical transmembrane segment at 49-64 (AMMGIAFAALLGAIAP) threads the bilayer. Residues 65–71 (QYAIIRW) lie on the Cytoplasmic side of the membrane. A helical transmembrane segment spans residues 72 to 89 (AGLIAWGYSAVRGLQLSI). Over 90–144 (EHVGYQFNPSPFATCDLFVQFPNWAPLNKWVPWMFEAYGNCAEVVWTFLGQSMPQ) the chain is Periplasmic. Cys104 and Cys130 are oxidised to a cystine. Residues 145 to 163 (WLVIIFAGNLVALALIVIA) form a helical membrane-spanning segment. At 164–176 (QFFSKKTNTILDM) the chain is on the cytoplasmic side.

This sequence belongs to the DsbB family.

The protein localises to the cell inner membrane. Its function is as follows. Required for disulfide bond formation in some periplasmic proteins. Acts by oxidizing the DsbA protein. This Photobacterium profundum (strain SS9) protein is Disulfide bond formation protein B.